The chain runs to 299 residues: Caspase-1 (299 aa).

The propeptide occupies 1 to 28; the sequence is MLDGKQDNGNVDSVDIKQRTNGGGDEGD. A disordered region spans residues 1–45; that stretch reads MLDGKQDNGNVDSVDIKQRTNGGGDEGDALGSNSSSQPNRVARMP. Active-site residues include His-136 and Cys-178. A propeptide spanning residues 185 to 195 is cleaved from the precursor; it reads GGITLSRTETD.

Belongs to the peptidase C14A family. Heterotetramer that consists of two anti-parallel arranged heterodimers, each one formed by a 19/18 kDa (p19/18) and a 12 kDa (p12) subunit. Post-translationally, the two subunits are derived from the precursor sequence by an autocatalytic mechanism.

Its function is as follows. Involved in the activation cascade of caspases responsible for apoptosis execution. Inhibited by the baculovirus anti-apoptotic protein p35. Cleaves p35 and nuclear immunophilin FKBP46. This Spodoptera frugiperda (Fall armyworm) protein is Caspase-1.